Reading from the N-terminus, the 222-residue chain is Guanylate kinase (222 aa).

Residues 19–197 (GFLFILSSPS…SVSLIKSIYL (179 aa)) form the Guanylate kinase-like domain. Position 26 to 33 (26 to 33 (SPSGAGKS)) interacts with ATP.

This sequence belongs to the guanylate kinase family.

The protein localises to the cytoplasm. It catalyses the reaction GMP + ATP = GDP + ADP. Functionally, essential for recycling GMP and indirectly, cGMP. This Bartonella henselae (strain ATCC 49882 / DSM 28221 / CCUG 30454 / Houston 1) (Rochalimaea henselae) protein is Guanylate kinase.